We begin with the raw amino-acid sequence, 452 residues long: MAPSLSPIRSHHVAVIGAGAAGLVAARELRREGHSVVVFERQKQVGGTWIYTDHIEPDPLSVDPTRSVVHSSVYGSLRTNLPRECMGYRDFPFVIRSDVSESRDPRRFPSHGEVLAYLQDFAKEFAIEEMIRFDTAVVKVAPAAEEGSGKWRIESTEKEKKVLRDEIYDAVVVCNGHYIEPRHAEIPGISSWPGKEMHSHNYRIPEPFRDQVVVLIGNSASADDISRDIARVAKEVHVACRSNAADTYIERPGYSNLWMHSMIESVHEDGSVVFQNGKTISVDVIMHCTGYKYHFPFLETNGNVTVDDNRVGPLYKDVFSPAFAPWLSFVGIPWKVVPFPMFELQSKWIAGVLSGRIPLPSKEDMMMEIKTLYSTLDAQGIAKRYTHQMGISQFEYNSWLASQCGCSETEEWRKEMYFATGVKKRAHPETYRDEWDDHHLVSQAYQDFSLYT.

G17 to G22 lines the FAD pocket. Residue G217–A222 participates in NADP(+) binding.

The protein belongs to the FMO family. FAD is required as a cofactor.

Catalyzes the conversion of methylthioalkyl glucosinolates of any chain length into methylsulfinylalkyl glucosinolates. This Arabidopsis thaliana (Mouse-ear cress) protein is Flavin-containing monooxygenase FMO GS-OX-like 4.